The chain runs to 388 residues: Na(+)/H(+) antiporter NhaA (388 aa).

The Cytoplasmic portion of the chain corresponds to 1-11; the sequence is MKHLHRFFSSD. A helical membrane pass occupies residues 12–31; sequence ASGGIILIIAAILAMIMANS. Residues 32 to 58 lie on the Periplasmic side of the membrane; it reads GATSGWYHDFLETPVQLRVGSLEINKN. The helical transmembrane segment at 59-80 threads the bilayer; the sequence is MLLWINDALMAVFFLLVGLEVK. Residues 81 to 96 are Cytoplasmic-facing; it reads RELMQGSLASLRQAAF. Residues 97-116 form a helical membrane-spanning segment; sequence PVIAAIGGMIVPALLYLAFN. The Periplasmic portion of the chain corresponds to 117-122; the sequence is YADPIT. The chain crosses the membrane as a helical span at residues 123–130; that stretch reads REGWAIPA. Residues 131 to 154 lie on the Cytoplasmic side of the membrane; sequence ATDIAFALGVLALLGSRVPLALKI. Residues 155–176 traverse the membrane as a helical segment; the sequence is FLMALAIIDDLGAIIIIALFYT. The Periplasmic portion of the chain corresponds to 177 to 180; sequence NDLS. Residues 181–200 traverse the membrane as a helical segment; the sequence is MASLGVAAVAIAVLAVLNLC. The Cytoplasmic portion of the chain corresponds to 201 to 204; that stretch reads GVRR. Residues 205-222 traverse the membrane as a helical segment; that stretch reads TGVYILVGVVLWTAVLKS. Glycine 223 is a topological domain (periplasmic). Residues 224–236 traverse the membrane as a helical segment; it reads VHATLAGVIVGFF. Over 237 to 253 the chain is Cytoplasmic; that stretch reads IPLKEKHGRSPAKRLEH. Residues 254-272 form a helical membrane-spanning segment; it reads VLHPWVAYLILPLFAFANA. At 273-286 the chain is on the periplasmic side; it reads GVSLQGVTLDGLTS. The chain crosses the membrane as a helical span at residues 287–310; that stretch reads ILPLGIIAGLLIGKPLGISLFCWL. Residues 311–339 lie on the Cytoplasmic side of the membrane; sequence ALRLKLAHLPEGTTYQQIMAVGILCGIGF. A helical membrane pass occupies residues 340–350; it reads TMSIFIASLAF. Topologically, residues 351-357 are periplasmic; that stretch reads GSVDPEL. The chain crosses the membrane as a helical span at residues 358 to 380; the sequence is INWAKLGILVGSISSAVIGYSWL. Over 381-388 the chain is Cytoplasmic; sequence RVRLRPSV.

This sequence belongs to the NhaA Na(+)/H(+) (TC 2.A.33) antiporter family.

Its subcellular location is the cell inner membrane. It catalyses the reaction Na(+)(in) + 2 H(+)(out) = Na(+)(out) + 2 H(+)(in). Functionally, na(+)/H(+) antiporter that extrudes sodium in exchange for external protons. In Escherichia coli O9:H4 (strain HS), this protein is Na(+)/H(+) antiporter NhaA.